A 334-amino-acid chain; its full sequence is Glyceraldehyde-3-phosphate dehydrogenase 1 (334 aa).

Residues 12 to 13 (RI), D35, and R79 each bind NAD(+). D-glyceraldehyde 3-phosphate contacts are provided by residues 152–154 (SCT), T183, R198, 211–212 (SG), and R234. The active-site Nucleophile is C153. N315 lines the NAD(+) pocket.

This sequence belongs to the glyceraldehyde-3-phosphate dehydrogenase family. In terms of assembly, homotetramer.

The protein localises to the cytoplasm. The catalysed reaction is D-glyceraldehyde 3-phosphate + phosphate + NAD(+) = (2R)-3-phospho-glyceroyl phosphate + NADH + H(+). It functions in the pathway carbohydrate degradation; glycolysis; pyruvate from D-glyceraldehyde 3-phosphate: step 1/5. With respect to regulation, resistant to pentalenolactone. In terms of biological role, catalyzes the oxidative phosphorylation of glyceraldehyde 3-phosphate (G3P) to 1,3-bisphosphoglycerate (BPG) using the cofactor NAD. The first reaction step involves the formation of a hemiacetal intermediate between G3P and a cysteine residue, and this hemiacetal intermediate is then oxidized to a thioester, with concomitant reduction of NAD to NADH. The reduced NADH is then exchanged with the second NAD, and the thioester is attacked by a nucleophilic inorganic phosphate to produce BPG. This chain is Glyceraldehyde-3-phosphate dehydrogenase 1 (gap1), found in Streptomyces avermitilis (strain ATCC 31267 / DSM 46492 / JCM 5070 / NBRC 14893 / NCIMB 12804 / NRRL 8165 / MA-4680).